Here is a 310-residue protein sequence, read N- to C-terminus: Protein OS-9 homolog (310 aa).

The signal sequence occupies residues 1 to 40; it reads MFSSSMFPHLILPAIGSSKVRTMVLPFAFVGFFIFPICLA. Asparagine 60, asparagine 97, and asparagine 104 each carry an N-linked (GlcNAc...) asparagine glycan. Positions 129–255 constitute an MRH domain; it reads NVFLIENRGY…TIHVPGLCSL (127 aa). A mannooligosaccharide derivative is bound by residues tryptophan 139 and glutamine 151. N-linked (GlcNAc...) asparagine glycosylation is present at asparagine 204. 2 disulfides stabilise this stretch: cysteine 208-cysteine 241 and cysteine 223-cysteine 253. A mannooligosaccharide derivative contacts are provided by aspartate 209, arginine 215, glutamate 237, and tyrosine 243. Composition is skewed to basic and acidic residues over residues 282 to 292 and 301 to 310; these read VDHKDSQHVVD and EVKEVETQSS. The segment at 282 to 310 is disordered; that stretch reads VDHKDSQHVVDEVAQTSPPEVKEVETQSS.

It belongs to the OS-9 family. In terms of assembly, interacts with missfolded ER lumenal proteins.

It localises to the endoplasmic reticulum membrane. Lectin involved in the quality control of the secretory pathway. As a member of the endoplasmic reticulum-associated degradation lumenal (ERAD-L) surveillance system, targets misfolded endoplasmic reticulum lumenal glycoproteins for degradation. This Schizosaccharomyces pombe (strain 972 / ATCC 24843) (Fission yeast) protein is Protein OS-9 homolog (yos9).